The sequence spans 22 residues: C-type natriuretic peptide (22 aa).

Cysteine 6 and cysteine 22 are oxidised to a cystine.

This sequence belongs to the natriuretic peptide family.

The protein resides in the secreted. Its function is as follows. Hormone which plays a role in endochondral ossification through regulation of cartilaginous growth plate chondrocytes proliferation and differentiation. May also be vasoactive and natriuretic. Specifically binds and stimulates the cGMP production of the NPR2 receptor. Binds the clearance receptor NPR3. The chain is C-type natriuretic peptide (NPPC) from Gallus gallus (Chicken).